The sequence spans 338 residues: Lipoate-protein ligase A (338 aa).

The 188-residue stretch at Pro-29–Val-216 folds into the BPL/LPL catalytic domain. ATP contacts are provided by residues Arg-71, Gly-76 to Phe-79, and Lys-134. (R)-lipoate is bound at residue Lys-134.

The protein belongs to the LplA family. Monomer.

It localises to the cytoplasm. The enzyme catalyses L-lysyl-[lipoyl-carrier protein] + (R)-lipoate + ATP = N(6)-[(R)-lipoyl]-L-lysyl-[lipoyl-carrier protein] + AMP + diphosphate + H(+). Its pathway is protein modification; protein lipoylation via exogenous pathway; protein N(6)-(lipoyl)lysine from lipoate: step 1/2. It participates in protein modification; protein lipoylation via exogenous pathway; protein N(6)-(lipoyl)lysine from lipoate: step 2/2. Its function is as follows. Catalyzes both the ATP-dependent activation of exogenously supplied lipoate to lipoyl-AMP and the transfer of the activated lipoyl onto the lipoyl domains of lipoate-dependent enzymes. This is Lipoate-protein ligase A from Salmonella paratyphi C (strain RKS4594).